Reading from the N-terminus, the 181-residue chain is ATP synthase subunit b (181 aa).

Residues 16-36 (LIPPIPELVIGLIAFVIVFGF) form a helical membrane-spanning segment.

Belongs to the ATPase B chain family. In terms of assembly, F-type ATPases have 2 components, F(1) - the catalytic core - and F(0) - the membrane proton channel. F(1) has five subunits: alpha(3), beta(3), gamma(1), delta(1), epsilon(1). F(0) has three main subunits: a(1), b(2) and c(10-14). The alpha and beta chains form an alternating ring which encloses part of the gamma chain. F(1) is attached to F(0) by a central stalk formed by the gamma and epsilon chains, while a peripheral stalk is formed by the delta and b chains.

The protein localises to the cell membrane. In terms of biological role, f(1)F(0) ATP synthase produces ATP from ADP in the presence of a proton or sodium gradient. F-type ATPases consist of two structural domains, F(1) containing the extramembraneous catalytic core and F(0) containing the membrane proton channel, linked together by a central stalk and a peripheral stalk. During catalysis, ATP synthesis in the catalytic domain of F(1) is coupled via a rotary mechanism of the central stalk subunits to proton translocation. Functionally, component of the F(0) channel, it forms part of the peripheral stalk, linking F(1) to F(0). The chain is ATP synthase subunit b from Streptomyces lividans.